We begin with the raw amino-acid sequence, 192 residues long: Large ribosomal subunit protein bL25 (192 aa).

It belongs to the bacterial ribosomal protein bL25 family. CTC subfamily. In terms of assembly, part of the 50S ribosomal subunit; part of the 5S rRNA/L5/L18/L25 subcomplex. Contacts the 5S rRNA. Binds to the 5S rRNA independently of L5 and L18.

In terms of biological role, this is one of the proteins that binds to the 5S RNA in the ribosome where it forms part of the central protuberance. In Marinomonas sp. (strain MWYL1), this protein is Large ribosomal subunit protein bL25.